The following is a 394-amino-acid chain: Elongation factor Tu (394 aa).

A tr-type G domain is found at 10 to 204 (KPHVNIGTIG…AVDSYIPQPV (195 aa)). A G1 region spans residues 19-26 (GHVDHGKT). Residue 19-26 (GHVDHGKT) coordinates GTP. Residue Thr-26 participates in Mg(2+) binding. The tract at residues 60 to 64 (GITIS) is G2. Positions 81 to 84 (DCPG) are G3. GTP contacts are provided by residues 81 to 85 (DCPGH) and 136 to 139 (NKVD). The G4 stretch occupies residues 136–139 (NKVD). The interval 174 to 176 (SAL) is G5.

This sequence belongs to the TRAFAC class translation factor GTPase superfamily. Classic translation factor GTPase family. EF-Tu/EF-1A subfamily. In terms of assembly, monomer.

It localises to the cytoplasm. It catalyses the reaction GTP + H2O = GDP + phosphate + H(+). GTP hydrolase that promotes the GTP-dependent binding of aminoacyl-tRNA to the A-site of ribosomes during protein biosynthesis. This chain is Elongation factor Tu, found in Rickettsia felis (strain ATCC VR-1525 / URRWXCal2) (Rickettsia azadi).